We begin with the raw amino-acid sequence, 300 residues long: Arginine/serine-rich protein 1 (300 aa).

Residues 1–142 (MSSAAVSKYV…RGRSHHRRSY (142 aa)) are disordered. The residue at position 17 (Ser-17) is a Phosphoserine. A compositionally biased stretch (low complexity) spans 23-36 (SPSTSGSGRSSRLS). The span at 37–104 (SRSRSRSSSR…RSRSRSRGHR (68 aa)) shows a compositional bias: basic residues. A compositionally biased stretch (basic and acidic residues) spans 105–115 (YYRDSRYEQPR). The segment covering 116–125 (RYYQSPSPYR) has biased composition (low complexity). Residues Ser-120 and Ser-122 each carry the phosphoserine modification. Residues 126-141 (SRSRSRSRGRSHHRRS) show a composition bias toward basic residues. The residue at position 147 (Arg-147) is an Omega-N-methylarginine. The interval 222–300 (QGAVSCSGPK…KSPYGLWIPV (79 aa)) is disordered. The segment covering 268-277 (PLEKTTKAAV) has biased composition (basic and acidic residues). Ser-284 carries the post-translational modification Phosphoserine.

The protein belongs to the RSRP family. Post-translationally, phosphorylated. Phosphorylation at Ser-120 and Ser-122 mediates the interaction with spliceosome proteins.

The protein resides in the nucleus. In terms of biological role, probably acts as a spliceosomal factor that contributes to spliceosome assembly and regulates the isoform switching of proteins such as PARP6. The chain is Arginine/serine-rich protein 1 (Rsrp1) from Rattus norvegicus (Rat).